Consider the following 204-residue polypeptide: Dephospho-CoA kinase (204 aa).

One can recognise a DPCK domain in the interval 12 to 204 (RIGVTGGIAS…AWRDQISSIC (193 aa)). Residue 20–25 (ASGKSS) participates in ATP binding.

It belongs to the CoaE family.

Its subcellular location is the cytoplasm. The enzyme catalyses 3'-dephospho-CoA + ATP = ADP + CoA + H(+). It functions in the pathway cofactor biosynthesis; coenzyme A biosynthesis; CoA from (R)-pantothenate: step 5/5. In terms of biological role, catalyzes the phosphorylation of the 3'-hydroxyl group of dephosphocoenzyme A to form coenzyme A. This Prochlorococcus marinus (strain MIT 9313) protein is Dephospho-CoA kinase.